The chain runs to 198 residues: NAD(P)H dehydrogenase (quinone) (198 aa).

In terms of domain architecture, Flavodoxin-like spans 4 to 189 (VLVLYYSMYG…SIARYQGEYV (186 aa)). FMN-binding positions include 10-15 (SMYGHI) and 78-80 (TRF). Tyr12 contributes to the NAD(+) binding site. Trp98 provides a ligand contact to substrate. FMN contacts are provided by residues 113 to 118 (STGTGG) and His133.

It belongs to the WrbA family. The cofactor is FMN.

It catalyses the reaction a quinone + NADH + H(+) = a quinol + NAD(+). The catalysed reaction is a quinone + NADPH + H(+) = a quinol + NADP(+). The chain is NAD(P)H dehydrogenase (quinone) from Escherichia coli O157:H7.